The sequence spans 255 residues: Imidazole glycerol phosphate synthase subunit HisF (255 aa).

Catalysis depends on residues D11 and D130.

The protein belongs to the HisA/HisF family. Heterodimer of HisH and HisF.

The protein localises to the cytoplasm. It carries out the reaction 5-[(5-phospho-1-deoxy-D-ribulos-1-ylimino)methylamino]-1-(5-phospho-beta-D-ribosyl)imidazole-4-carboxamide + L-glutamine = D-erythro-1-(imidazol-4-yl)glycerol 3-phosphate + 5-amino-1-(5-phospho-beta-D-ribosyl)imidazole-4-carboxamide + L-glutamate + H(+). It participates in amino-acid biosynthesis; L-histidine biosynthesis; L-histidine from 5-phospho-alpha-D-ribose 1-diphosphate: step 5/9. IGPS catalyzes the conversion of PRFAR and glutamine to IGP, AICAR and glutamate. The HisF subunit catalyzes the cyclization activity that produces IGP and AICAR from PRFAR using the ammonia provided by the HisH subunit. The polypeptide is Imidazole glycerol phosphate synthase subunit HisF (Rhodopseudomonas palustris (strain ATCC BAA-98 / CGA009)).